The following is a 287-amino-acid chain: ATP synthase gamma chain (287 aa).

The protein belongs to the ATPase gamma chain family. In terms of assembly, F-type ATPases have 2 components, CF(1) - the catalytic core - and CF(0) - the membrane proton channel. CF(1) has five subunits: alpha(3), beta(3), gamma(1), delta(1), epsilon(1). CF(0) has three main subunits: a, b and c.

The protein localises to the cell inner membrane. Produces ATP from ADP in the presence of a proton gradient across the membrane. The gamma chain is believed to be important in regulating ATPase activity and the flow of protons through the CF(0) complex. This chain is ATP synthase gamma chain, found in Tolumonas auensis (strain DSM 9187 / NBRC 110442 / TA 4).